The following is a 498-amino-acid chain: Probable malate:quinone oxidoreductase (498 aa).

It belongs to the MQO family. Requires FAD as cofactor.

It catalyses the reaction (S)-malate + a quinone = a quinol + oxaloacetate. The protein operates within carbohydrate metabolism; tricarboxylic acid cycle; oxaloacetate from (S)-malate (quinone route): step 1/1. This chain is Probable malate:quinone oxidoreductase, found in Prochlorococcus marinus (strain MIT 9312).